Reading from the N-terminus, the 406-residue chain is Cysteine desulfurase (406 aa).

Lys-226 carries the post-translational modification N6-(pyridoxal phosphate)lysine. The Cysteine persulfide intermediate role is filled by Cys-364.

This sequence belongs to the class-V pyridoxal-phosphate-dependent aminotransferase family. Csd subfamily. In terms of assembly, homodimer. Interacts with SufE and the SufBCD complex composed of SufB, SufC and SufD. The interaction with SufE is required to mediate the direct transfer of the sulfur atom from the S-sulfanylcysteine. The cofactor is pyridoxal 5'-phosphate.

It localises to the cytoplasm. The enzyme catalyses (sulfur carrier)-H + L-cysteine = (sulfur carrier)-SH + L-alanine. The catalysed reaction is L-selenocysteine + AH2 = hydrogenselenide + L-alanine + A + H(+). Its pathway is cofactor biosynthesis; iron-sulfur cluster biosynthesis. Functionally, cysteine desulfurases mobilize the sulfur from L-cysteine to yield L-alanine, an essential step in sulfur metabolism for biosynthesis of a variety of sulfur-containing biomolecules. Component of the suf operon, which is activated and required under specific conditions such as oxidative stress and iron limitation. Acts as a potent selenocysteine lyase in vitro, that mobilizes selenium from L-selenocysteine. Selenocysteine lyase activity is however unsure in vivo. This chain is Cysteine desulfurase, found in Escherichia coli O139:H28 (strain E24377A / ETEC).